We begin with the raw amino-acid sequence, 196 residues long: ATP-dependent Clp protease proteolytic subunit (196 aa).

The active-site Nucleophile is the S101. H126 is an active-site residue.

This sequence belongs to the peptidase S14 family. As to quaternary structure, component of the chloroplastic Clp protease core complex.

Its subcellular location is the plastid. It localises to the chloroplast stroma. It catalyses the reaction Hydrolysis of proteins to small peptides in the presence of ATP and magnesium. alpha-casein is the usual test substrate. In the absence of ATP, only oligopeptides shorter than five residues are hydrolyzed (such as succinyl-Leu-Tyr-|-NHMec, and Leu-Tyr-Leu-|-Tyr-Trp, in which cleavage of the -Tyr-|-Leu- and -Tyr-|-Trp bonds also occurs).. Its function is as follows. Cleaves peptides in various proteins in a process that requires ATP hydrolysis. Has a chymotrypsin-like activity. Plays a major role in the degradation of misfolded proteins. The protein is ATP-dependent Clp protease proteolytic subunit of Gossypium hirsutum (Upland cotton).